Consider the following 127-residue polypeptide: Snaclec macrovipecetin subunit beta (127 aa).

3 disulfides stabilise this stretch: cysteine 4/cysteine 15, cysteine 32/cysteine 121, and cysteine 98/cysteine 113. Residues 11-122 (YEGHCYKVFD…CSRTYKFVCK (112 aa)) enclose the C-type lectin domain.

As to quaternary structure, heterodimer of subunits alpha and beta; disulfide-linked. As to expression, expressed by the venom gland.

The protein resides in the secreted. In terms of biological role, interferes with one step of hemostasis (modulation of platelet aggregation, or coagulation cascade, for example). This chain is Snaclec macrovipecetin subunit beta, found in Macrovipera lebetinus (Levantine viper).